A 543-amino-acid chain; its full sequence is Mitochondrial distribution and morphology protein 34 (543 aa).

One can recognise an SMP-LTD domain in the interval Met-1–Leu-202. The disordered stretch occupies residues Ala-519–Ala-543.

Belongs to the MDM34 family. In terms of assembly, component of the ER-mitochondria encounter structure (ERMES) or MDM complex, composed of MMM1, MDM10, MDM12 and MDM34.

The protein resides in the mitochondrion outer membrane. Functionally, component of the ERMES/MDM complex, which serves as a molecular tether to connect the endoplasmic reticulum (ER) and mitochondria. Components of this complex are involved in the control of mitochondrial shape and protein biogenesis, and function in nonvesicular lipid trafficking between the ER and mitochondria. MDM34 is required for the interaction of the ER-resident membrane protein MMM1 and the outer mitochondrial membrane-resident beta-barrel protein MDM10. The protein is Mitochondrial distribution and morphology protein 34 of Clavispora lusitaniae (strain ATCC 42720) (Yeast).